The chain runs to 670 residues: Major fimbrium tip subunit FimD (670 aa).

Residues Met1–Gly24 form the signal peptide. A lipid anchor (N-palmitoyl cysteine) is attached at Cys25. Cys25 carries the S-diacylglycerol cysteine lipid modification. The propeptide occupies Cys25 to Arg50.

It belongs to the FimD family. As to quaternary structure, fimbriae are composed of a major, structural subunit and the minor components FimC, FimD and FimE. Identified in a complex composed of FimC, FimD and FimE (in vitro). The complex interacts with host extracellular matrix proteins, including fibronectin and type I collagen. Interacts with host CXCR4.

It is found in the fimbrium. Its subcellular location is the cell outer membrane. Its function is as follows. Probably a component of the fimbrium tip. These long, filamentous pili are attached to the cell surface; they mediate biofilm formation, adhesion onto host cells and onto other bacteria that are part of the oral microbiome. They play an important role in invasion of periodontal tissues and are major virulence factors. FimC, FimD and FimE contribute to interaction with host CXCR4 and thereby down-regulate the TLR2-mediated host immune response. This Porphyromonas gingivalis (strain ATCC 33277 / DSM 20709 / CIP 103683 / JCM 12257 / NCTC 11834 / 2561) protein is Major fimbrium tip subunit FimD.